A 518-amino-acid polypeptide reads, in one-letter code: Chromosomal replication initiator protein DnaA (518 aa).

The domain I, interacts with DnaA modulators stretch occupies residues 1 to 73; that stretch reads MTLAEFWPLC…REELAAGRPA (73 aa). The segment at 73-180 is domain II; it reads AFVFKPGEGV…DAEEARYEQT (108 aa). The tract at residues 144 to 180 is disordered; sequence HEPRQAAGPASRPESAAVAKARTDAQRDAEEARYEQT. Basic and acidic residues predominate over residues 164–177; it reads ARTDAQRDAEEARY. The domain III, AAA+ region stretch occupies residues 181–397; that stretch reads NLSPDYTFDT…GAFNRVGASS (217 aa). ATP contacts are provided by glycine 225, glycine 227, lysine 228, and threonine 229. The interval 398-518 is domain IV, binds dsDNA; that stretch reads RFMNRPVIDI…YEKLLILIQN (121 aa).

This sequence belongs to the DnaA family. As to quaternary structure, oligomerizes as a right-handed, spiral filament on DNA at oriC.

The protein resides in the cytoplasm. Its function is as follows. Plays an essential role in the initiation and regulation of chromosomal replication. ATP-DnaA binds to the origin of replication (oriC) to initiate formation of the DNA replication initiation complex once per cell cycle. Binds the DnaA box (a 9 base pair repeat at the origin) and separates the double-stranded (ds)DNA. Forms a right-handed helical filament on oriC DNA; dsDNA binds to the exterior of the filament while single-stranded (ss)DNA is stabiized in the filament's interior. The ATP-DnaA-oriC complex binds and stabilizes one strand of the AT-rich DNA unwinding element (DUE), permitting loading of DNA polymerase. After initiation quickly degrades to an ADP-DnaA complex that is not apt for DNA replication. Binds acidic phospholipids. The sequence is that of Chromosomal replication initiator protein DnaA from Neisseria gonorrhoeae (strain ATCC 700825 / FA 1090).